Reading from the N-terminus, the 189-residue chain is Probable nicotinate-nucleotide adenylyltransferase (189 aa).

It belongs to the NadD family.

It carries out the reaction nicotinate beta-D-ribonucleotide + ATP + H(+) = deamido-NAD(+) + diphosphate. It functions in the pathway cofactor biosynthesis; NAD(+) biosynthesis; deamido-NAD(+) from nicotinate D-ribonucleotide: step 1/1. Its function is as follows. Catalyzes the reversible adenylation of nicotinate mononucleotide (NaMN) to nicotinic acid adenine dinucleotide (NaAD). This is Probable nicotinate-nucleotide adenylyltransferase from Caulobacter sp. (strain K31).